The following is a 450-amino-acid chain: Alpha-2B adrenergic receptor (450 aa).

Over 1–12 the chain is Extracellular; the sequence is MDHQDPYSVQAT. A helical membrane pass occupies residues 13-38; the sequence is AAIAAAITFLILFTIFGNALVILAVL. Over 39–48 the chain is Cytoplasmic; that stretch reads TSRSLRAPQN. The helical transmembrane segment at 49–69 threads the bilayer; it reads LFLVSLAAADILVATLIIPFS. At 70–86 the chain is on the extracellular side; the sequence is LANELLGYWYFRRTWCE. The cysteines at positions 85 and 164 are disulfide-linked. A helical transmembrane segment spans residues 87–107; it reads VYLALDVLFCTSSIVHLCAIS. At 108–128 the chain is on the cytoplasmic side; that stretch reads LDRYWAVSRALEYNSKRTPRR. A helical membrane pass occupies residues 129–149; the sequence is IKCIILTVWLIAAVISLPPLI. Residues 150-172 are Extracellular-facing; it reads YKGDQGPQPRGRPQCKLNQEAWY. A helical transmembrane segment spans residues 173–193; it reads ILASSIGSFFAPCLIMILVYL. Residues 194-368 are Cytoplasmic-facing; it reads RIYLIAKRSN…RRAQLTREKR (175 aa). 2 disordered regions span residues 204 to 229 and 241 to 329; these read RRGP…GGAL and ASAR…PLQQ. Residues 246–256 show a composition bias toward basic and acidic residues; it reads VNGHSKSTGEK. Acidic residues predominate over residues 293–311; it reads PEDEAEEEEEEEEEEEECE. The segment covering 312-326 has biased composition (low complexity); the sequence is PQAVPVSPASACSPP. The helical transmembrane segment at 369–389 threads the bilayer; that stretch reads FTFVLAVVIGVFVLCWFPFFF. Residues 390-405 lie on the Extracellular side of the membrane; the sequence is SYSLGAICPKHCKVPH. A helical transmembrane segment spans residues 406 to 426; it reads GLFQFFFWIGYCNSSLNPVIY. The Cytoplasmic portion of the chain corresponds to 427–450; it reads TIFNQDFRRAFRRILCRPWTQTAW. Cysteine 442 carries the S-palmitoyl cysteine lipid modification.

It belongs to the G-protein coupled receptor 1 family. Adrenergic receptor subfamily. ADRA2B sub-subfamily. Interacts with RAB26. Interacts with PPP1R9B. Interacts with GGA1, GGA2 and GGA3.

The protein localises to the cell membrane. Its function is as follows. Alpha-2 adrenergic receptors mediate the catecholamine-induced inhibition of adenylate cyclase through the action of G proteins. The rank order of potency for agonists of this receptor is clonidine &gt; norepinephrine &gt; epinephrine = oxymetazoline &gt; dopamine &gt; p-tyramine = phenylephrine &gt; serotonin &gt; p-synephrine / p-octopamine. For antagonists, the rank order is yohimbine &gt; chlorpromazine &gt; phentolamine &gt; mianserine &gt; spiperone &gt; prazosin &gt; alprenolol &gt; propanolol &gt; pindolol. In Homo sapiens (Human), this protein is Alpha-2B adrenergic receptor (ADRA2B).